Consider the following 60-residue polypeptide: Metallothionein (60 aa).

N-acetylmethionine is present on Met-1. The tract at residues 1–28 is beta; it reads MDPCECSKTGTCNCGGSCTCKNCSCTTC. The a divalent metal cation site is built by Cys-4, Cys-6, Cys-12, Cys-14, Cys-18, Cys-20, Cys-23, Cys-25, Cys-28, Cys-32, Cys-33, Cys-35, Cys-36, Cys-40, Cys-43, Cys-47, Cys-49, Cys-54, Cys-58, and Cys-59. The interval 29 to 60 is alpha; sequence NKSCCPCCPSGCPKCASGCVCKGKTCDTSCCQ.

This sequence belongs to the metallothionein superfamily. Type 1 family.

Metallothioneins have a high content of cysteine residues that bind various heavy metals. The sequence is that of Metallothionein (mt) from Pleuronectes platessa (European plaice).